Reading from the N-terminus, the 140-residue chain is uncharacterized protein (140 aa).

Basic and acidic residues predominate over residues 1 to 15 (MQRQTGHMEDKKRTG). The tract at residues 1–34 (MQRQTGHMEDKKRTGLESQGTENAFSDGRDGKDG) is disordered.

This is an uncharacterized protein from Gallus gallus (Chicken).